Here is a 301-residue protein sequence, read N- to C-terminus: Ribonuclease HIII (301 aa).

An RNase H type-2 domain is found at 84–301 (ASAIGSDEVG…TEKAARIAKK (218 aa)). A divalent metal cation contacts are provided by aspartate 90, glutamate 91, and aspartate 195.

This sequence belongs to the RNase HII family. RnhC subfamily. Mn(2+) serves as cofactor. The cofactor is Mg(2+).

It localises to the cytoplasm. It catalyses the reaction Endonucleolytic cleavage to 5'-phosphomonoester.. In terms of biological role, endonuclease that specifically degrades the RNA of RNA-DNA hybrids. The sequence is that of Ribonuclease HIII from Geobacillus sp. (strain WCH70).